Reading from the N-terminus, the 260-residue chain is 3-dehydroquinate dehydratase (260 aa).

Residues 50–52 and arginine 86 contribute to the 3-dehydroquinate site; that span reads EWR. Residue histidine 148 is the Proton donor/acceptor of the active site. Catalysis depends on lysine 175, which acts as the Schiff-base intermediate with substrate. Positions 217, 236, and 240 each coordinate 3-dehydroquinate.

The protein belongs to the type-I 3-dehydroquinase family. In terms of assembly, homodimer.

It catalyses the reaction 3-dehydroquinate = 3-dehydroshikimate + H2O. The protein operates within metabolic intermediate biosynthesis; chorismate biosynthesis; chorismate from D-erythrose 4-phosphate and phosphoenolpyruvate: step 3/7. In terms of biological role, involved in the third step of the chorismate pathway, which leads to the biosynthesis of aromatic amino acids. Catalyzes the cis-dehydration of 3-dehydroquinate (DHQ) and introduces the first double bond of the aromatic ring to yield 3-dehydroshikimate. This Aromatoleum aromaticum (strain DSM 19018 / LMG 30748 / EbN1) (Azoarcus sp. (strain EbN1)) protein is 3-dehydroquinate dehydratase.